The primary structure comprises 162 residues: Ribosome maturation factor RimP (162 aa).

Belongs to the RimP family.

The protein resides in the cytoplasm. Functionally, required for maturation of 30S ribosomal subunits. This Cupriavidus pinatubonensis (strain JMP 134 / LMG 1197) (Cupriavidus necator (strain JMP 134)) protein is Ribosome maturation factor RimP.